The primary structure comprises 509 residues: MSSSAVSPKQWVAGLNSELDIPAVNRRTSIICTIGPKSNNVETLCKLRDAGMNIVRMNFSHGSYEYHQSVIDNARKASATNPLFPLAIALDTKGPEIRTGLTVGGTDYPISSGHEMIFTTDDAYAEKCNDKVMYIDYKNITKVIQPGRIIYVDDGILSFTVIEKVDDKNLKVRVNNNGKISSKKGVNLPKTDVDLPALSEKDKADLRFGVKNGVDMIFASFIRRAEDVIHIREVLGEEGKNIKIICKIENQQGVNNFDSILDVTDGIMVARGDLGIEIPASQVFVAQKMMIAKCNIAGKPVACATQMLESMTYNPRPTRAEVSDVGNAVLDGADLVMLSGETTKGSYPVEAVTYMAETARVAEASIPYGSLYQEMFGLVRRPLECATETTAVAAIGASIESDAKAIVVLSTSGNTARLCSKYRPSIPIVMVTRCPQRARQSHLNRGVYPVIYEKEPLSDWQKDVDARVAYGCQQAYKMNILKKGDKIIVLQGAVGGKGHTSIFRLTVAE.

A Phosphoserine modification is found at Ser29. Arg56 contacts substrate. K(+)-binding residues include Asn58 and Ser60. ATP is bound at residue 58 to 61 (NFSH). Residue Ser63 is modified to Phosphoserine. K(+) contacts are provided by Asp91 and Thr92. The ATP site is built by Arg98 and Lys184. Residue Glu249 participates in Mg(2+) binding. The substrate site is built by Gly272 and Asp273. Asp273 contacts Mg(2+). Residue Ser281 is modified to Phosphoserine. Thr305 serves as a coordination point for substrate. Ser412 is modified (phosphoserine).

Belongs to the pyruvate kinase family. Homotetramer. It depends on Mg(2+) as a cofactor. K(+) serves as cofactor.

The catalysed reaction is pyruvate + ATP = phosphoenolpyruvate + ADP + H(+). The protein operates within carbohydrate degradation; glycolysis; pyruvate from D-glyceraldehyde 3-phosphate: step 5/5. The protein is Pyruvate kinase (pyk1) of Schizosaccharomyces pombe (strain 972 / ATCC 24843) (Fission yeast).